The following is a 383-amino-acid chain: Guanine nucleotide-binding protein G(s) subunit alpha (383 aa).

Residues 1 to 31 (MGCFGSAGSKQSDSNSSEDTKSQKRRSDAIT) are disordered. Residue G2 is the site of N-palmitoyl glycine attachment. C3 is lipidated: S-palmitoyl cysteine. Polar residues predominate over residues 8–17 (GSKQSDSNSS). Residues 18–31 (EDTKSQKRRSDAIT) are compositionally biased toward basic and acidic residues. Residues 43 to 383 (ATHRLLLLGA…RMHLRQYELL (341 aa)) form the G-alpha domain. The tract at residues 46–59 (RLLLLGAGESGKST) is G1 motif. Residues 51-58 (GAGESGKS), 187-193 (LRCRVLT), 212-216 (DVGGQ), 281-284 (NKQD), and A355 contribute to the GTP site. Residues S58 and T193 each contribute to the Mg(2+) site. The G2 motif stretch occupies residues 185–193 (DILRCRVLT). Residues 208–217 (FHMFDVGGQR) form a G3 motif region. Residues 277–284 (ILFLNKQD) are G4 motif. Positions 353-358 (TCAVDT) are G5 motif.

This sequence belongs to the G-alpha family. G(s) subfamily. In terms of assembly, g proteins are composed of 3 units; alpha, beta and gamma. The alpha chain contains the guanine nucleotide binding site.

Functionally, guanine nucleotide-binding proteins (G proteins) are involved as modulators or transducers in various transmembrane signaling systems. The G(s) protein is involved in hormonal regulation of adenylate cyclase: it activates the cyclase. Participates in olfactory signal transduction. The sequence is that of Guanine nucleotide-binding protein G(s) subunit alpha from Anopheles gambiae (African malaria mosquito).